The primary structure comprises 311 residues: Probable manganese-dependent inorganic pyrophosphatase (311 aa).

Residues H9, D13, D15, D77, H99, and D151 each contribute to the Mn(2+) site.

It belongs to the PPase class C family. The cofactor is Mn(2+).

Its subcellular location is the cytoplasm. It carries out the reaction diphosphate + H2O = 2 phosphate + H(+). This Streptococcus suis (strain 98HAH33) protein is Probable manganese-dependent inorganic pyrophosphatase.